Reading from the N-terminus, the 61-residue chain is Large ribosomal subunit protein bL32c (61 aa).

Positions 37 to 61 are disordered; that stretch reads SRSFSSGNEHPKPKGFSGQQQQTNK.

Belongs to the bacterial ribosomal protein bL32 family.

Its subcellular location is the plastid. The protein resides in the chloroplast. This is Large ribosomal subunit protein bL32c from Agrostis stolonifera (Creeping bentgrass).